The primary structure comprises 223 residues: Ribonuclease 3 (223 aa).

An RNase III domain is found at 3-125; it reads LERLQKKLGY…IIAAIYLDAG (123 aa). A Mg(2+)-binding site is contributed by Glu-38. Asp-42 is an active-site residue. Asp-111 and Glu-114 together coordinate Mg(2+). Glu-114 is a catalytic residue. The region spanning 152–222 is the DRBM domain; that stretch reads DPKTRLQEFL…AEQVLAKLTT (71 aa).

It belongs to the ribonuclease III family. As to quaternary structure, homodimer. Requires Mg(2+) as cofactor.

Its subcellular location is the cytoplasm. It carries out the reaction Endonucleolytic cleavage to 5'-phosphomonoester.. In terms of biological role, digests double-stranded RNA. Involved in the processing of primary rRNA transcript to yield the immediate precursors to the large and small rRNAs (23S and 16S). Processes some mRNAs, and tRNAs when they are encoded in the rRNA operon. Processes pre-crRNA and tracrRNA of type II CRISPR loci if present in the organism. The sequence is that of Ribonuclease 3 from Actinobacillus pleuropneumoniae serotype 3 (strain JL03).